The chain runs to 237 residues: Ribonuclease PH (237 aa).

Phosphate contacts are provided by residues arginine 86 and 124 to 126 (GTR).

The protein belongs to the RNase PH family. As to quaternary structure, homohexameric ring arranged as a trimer of dimers.

The enzyme catalyses tRNA(n+1) + phosphate = tRNA(n) + a ribonucleoside 5'-diphosphate. Functionally, phosphorolytic 3'-5' exoribonuclease that plays an important role in tRNA 3'-end maturation. Removes nucleotide residues following the 3'-CCA terminus of tRNAs; can also add nucleotides to the ends of RNA molecules by using nucleoside diphosphates as substrates, but this may not be physiologically important. Probably plays a role in initiation of 16S rRNA degradation (leading to ribosome degradation) during starvation. The chain is Ribonuclease PH from Tolumonas auensis (strain DSM 9187 / NBRC 110442 / TA 4).